The chain runs to 543 residues: MSDRVHERSMGMEEEGSTKNMKTKVLELPTKIKKILKNIWKVGKDDPRRVKHALKVGVSLTLVSLLYLMEPLFKGIGNSAIWAVMTVVVVLEFSAGATLCKGLNRGLGTLIAGSLAFFIEFVANDSGKIFRAIFIGAAVFIIGALITYLRFIPYIKKNYDYGMLIFLLTFNLITVSSYRVDTVIKIAHERFYTIAMGVGICLLMSLLVFPIWSGEDLHKSTVAKLQGLSYSIEACVNEYFEEEEKDEETSDLSEDTIYNGYKTVLDSKSADEALAMYASWEPRHTRHCHRFPWKHYVKVGSVLRQFGYTVVALHGCLKTEIQTPRPLRGLFKDPCVRLAGEICKVLSELAASIRNRRHCSPEILSDSLQVALQDLNTAIKSQPKLFLGSSQNGNVSQGNSGRHNPNVAVSQHINKDTNEAASYQNTGTPRGERMSRFGPNVSFSRLRADTLERRSAAATNERKILRQQLSRIVVLTSLEFSEALPFAAFASLLVEMVARLDNVIEEVEELGTIACFKDYDNNVDQKDVEVRVEKPADLVVGVE.

The next 6 membrane-spanning stretches (helical) occupy residues Val-56 to Ile-76, Ala-80 to Cys-100, Gly-106 to Ser-126, Ile-129 to Leu-149, Leu-164 to Ile-184, and Phe-191 to Ile-211. The tract at residues Asp-416 to Gly-438 is disordered. The segment covering Glu-419–Thr-428 has biased composition (polar residues). Residues Arg-445–Ile-472 are a coiled coil.

This sequence belongs to the aromatic acid exporter (TC 2.A.85) family.

The protein resides in the membrane. Its function is as follows. Malate transporter. This Arabidopsis thaliana (Mouse-ear cress) protein is Aluminum-activated malate transporter 14 (ALMT14).